Here is a 329-residue protein sequence, read N- to C-terminus: Beta-tectorin (329 aa).

An N-terminal signal peptide occupies residues 1-17 (MVAVTVYLMVILAQAFA). The 269-residue stretch at 19–287 (PCTPNKADVI…VTCDKRKQRM (269 aa)) folds into the ZP domain. Asn80, Asn104, Asn116, and Asn145 each carry an N-linked (GlcNAc...) asparagine glycan. An intrachain disulfide couples Cys204 to Cys264. Gly304 carries GPI-anchor amidated glycine lipidation. The propeptide at 305-329 (LSRFYMLSDVIFHLLFAIGFCAILL) is removed in mature form.

May form homomeric filament after self-association or heteromeric filament after association with alpha-tectorin. Post-translationally, the N-terminus is blocked. In terms of processing, N-glycosylated. The presence of a hydrophobic C-terminus preceded by a potential cleavage site strongly suggests that tectorins are synthesized as glycosylphosphatidylinositol-linked, membrane-bound precursors. Tectorins are targeted to the apical surface of the inner ear epithelia by the lipid and proteolytically released into the extracellular compartment. As to expression, exclusively expressed in the inner ear, where it is found in basilar papilla, clear cells, supporting cells, cuboidal cells and the lagena macula.

Its subcellular location is the cell membrane. The protein localises to the secreted. The protein resides in the extracellular space. It localises to the extracellular matrix. Its function is as follows. One of the major non-collagenous components of the tectorial membrane. The tectorial membrane is an extracellular matrix of the inner ear that covers the neuroepithelium of the cochlea and contacts the stereocilia bundles of specialized sensory hair cells. Sound induces movement of these hair cells relative to the tectorial membrane, deflects the stereocilia and leads to fluctuations in hair-cell membrane potential, transducing sound into electrical signals. The chain is Beta-tectorin (TECTB) from Gallus gallus (Chicken).